A 1976-amino-acid polypeptide reads, in one-letter code: Myosin-10 (1976 aa).

Arg-18 carries the omega-N-methylarginine modification. Positions 31 to 81 constitute a Myosin N-terminal SH3-like domain; that stretch reads TAKKLVWIPSERHGFEAASIKEERGDEVMVELAENGKKAMVNKDDIQKMNP. A Myosin motor domain is found at 85-783; that stretch reads SKVEDMAELT…VLAHLEEERD (699 aa). Residue 178-185 participates in ATP binding; it reads GESGAGKT. The residue at position 442 (Lys-442) is an N6-acetyllysine. The interval 661–683 is actin-binding; the sequence is LTKLMATLRNTNPNFVRCIIPNH. The 30-residue stretch at 786–815 folds into the IQ domain; that stretch reads ITDIIIFFQAVCRGYLARKAFAKKQQQLSA. Residues 845–1976 adopt a coiled-coil conformation; sequence LQVTRQEEEL…VNETQPPQSE (1132 aa). The segment at 1125–1175 is disordered; the sequence is EDFESEKASRNKAEKQKRDLSEELEALKTELEDTLDTTAAQQELRTKREQE. Residues 1129 to 1155 show a composition bias toward basic and acidic residues; that stretch reads SEKASRNKAEKQKRDLSEELEALKTEL. Ser-1145 is subject to Phosphoserine. An N6-acetyllysine mark is found at Lys-1241, Lys-1301, and Lys-1645. 2 disordered regions span residues 1697–1718 and 1874–1976; these read ASSE…DEIA and KANA…PQSE. Positions 1698 to 1708 are enriched in basic and acidic residues; that stretch reads SSERARRHAEQ. Arg-1930 carries the omega-N-methylarginine modification. Ser-1935, Ser-1937, Ser-1938, and Ser-1939 each carry phosphoserine. Arg-1940 is modified (omega-N-methylarginine). Ser-1952 and Ser-1956 each carry phosphoserine. Phosphothreonine is present on Thr-1960. Over residues 1967 to 1976 the composition is skewed to polar residues; that stretch reads VNETQPPQSE. Phosphoserine is present on Ser-1975.

Belongs to the TRAFAC class myosin-kinesin ATPase superfamily. Myosin family. Myosin is a hexameric protein that consists of 2 heavy chain subunits (MHC), 2 alkali light chain subunits (MLC) and 2 regulatory light chain subunits (MLC-2). Interacts with PLEKHG6. Interacts with ECPAS. Interacts with KIF26B. Interacts with LARP6. Interacts with MCC. Interacts with CFAP95. In terms of processing, phosphorylated by ABL2.

The protein localises to the cell projection. It localises to the lamellipodium. Involved with LARP6 in the stabilization of type I collagen mRNAs for CO1A1 and CO1A2. During cell spreading, plays an important role in cytoskeleton reorganization, focal contacts formation (in the central part but not the margins of spreading cells), and lamellipodial extension; this function is mechanically antagonized by MYH9. Cellular myosin that appears to play a role in cytokinesis, cell shape, and specialized functions such as secretion and capping. The sequence is that of Myosin-10 (Myh10) from Rattus norvegicus (Rat).